The following is a 137-amino-acid chain: Glutamate mutase sigma subunit (137 aa).

Residues 3 to 137 (KKTIVLGVIG…ADLKKDLNIE (135 aa)) enclose the B12-binding domain. Residues 13 to 17 (SDCHA), His16, 61 to 63 (SSL), and 93 to 97 (NIVVG) each bind adenosylcob(III)alamin.

It belongs to the methylaspartate mutase GlmS subunit family. In terms of assembly, heterotetramer composed of 2 epsilon subunits (GlmE) and 2 sigma subunits (GlmS). GlmE exists as a homodimer and GlmS as a monomer. Adenosylcob(III)alamin is required as a cofactor.

The enzyme catalyses (2S,3S)-3-methyl-L-aspartate = L-glutamate. Its pathway is amino-acid degradation; L-glutamate degradation via mesaconate pathway; acetate and pyruvate from L-glutamate: step 1/4. With respect to regulation, competitively inhibited by (2S,4S)-4-fluoroglutamate, 2-methyleneglutarate, (2R,3RS)-3-fluoroglutamate and (S)-3-methylitaconate. Functionally, catalyzes the carbon skeleton rearrangement of L-glutamate to L-threo-3-methylaspartate ((2S,3S)-3-methylaspartate). The protein is Glutamate mutase sigma subunit of Clostridium cochlearium.